Reading from the N-terminus, the 209-residue chain is Protein TIFY 11c (209 aa).

The Tify domain maps to 93-128 (EITEKAQLTIFYGGSVVVFDDFPAEKAGELMKLAGS). Positions 153 to 177 (PIARKVSLQRFLEKRKNRIVVAEPL) match the Jas motif. A Nuclear localization signal motif is present at residues 155–162 (ARKVSLQR). The segment at 175 to 209 (EPLPESEKKEAESSKRAKKDDGGASWLQVNPTLSL) is disordered. Positions 179–196 (ESEKKEAESSKRAKKDDG) are enriched in basic and acidic residues.

It belongs to the TIFY/JAZ family. Ubiquitinated. Targeted for degradation by the SCF(COI1) E3 ubiquitin ligase-proteasome pathway during jasmonate signaling.

It localises to the nucleus. Its function is as follows. Repressor of jasmonate responses. In Oryza sativa subsp. indica (Rice), this protein is Protein TIFY 11c.